The chain runs to 431 residues: Histidinol dehydrogenase (431 aa).

NAD(+) contacts are provided by Y127, Q189, and N212. The substrate site is built by S237, Q259, and H262. Zn(2+) contacts are provided by Q259 and H262. Catalysis depends on proton acceptor residues E326 and H327. 4 residues coordinate substrate: H327, D360, E414, and H419. A Zn(2+)-binding site is contributed by D360. H419 contacts Zn(2+).

Belongs to the histidinol dehydrogenase family. Zn(2+) serves as cofactor.

It carries out the reaction L-histidinol + 2 NAD(+) + H2O = L-histidine + 2 NADH + 3 H(+). Its pathway is amino-acid biosynthesis; L-histidine biosynthesis; L-histidine from 5-phospho-alpha-D-ribose 1-diphosphate: step 9/9. Catalyzes the sequential NAD-dependent oxidations of L-histidinol to L-histidinaldehyde and then to L-histidine. The sequence is that of Histidinol dehydrogenase from Xanthomonas euvesicatoria pv. vesicatoria (strain 85-10) (Xanthomonas campestris pv. vesicatoria).